The primary structure comprises 405 residues: MADVNKVVLAYSGGLDTSVILKWLQDTYNCEVVTFTADLGQGEEVEPARAKAQAMGVKEIYIDDLREEFVRDFVFPMFRANTVYEGEYLLGTSIARPLIAKRLIEIANETGADAISHGATGKGNDQVRFELGAYALKPGVKVIAPWREWDLLSREKLMDYAEKHNIPIERHGKKKSPYSMDANLLHISYEGGVLEDTWTEHEEDMWRWTKSPEDAPNVATYLELTYRNGDIVALDGVDMTPATVLATLNRIGGENGIGRLDIVENRYVGMKSRGCYETPGGTIMLRAHRAIESITLDREVAHLKDELMVKYASLIYTGYWWSPERLMLQQMIDASQVHVNGVVRLKLYKGNVIVTGRKSDDSLFDANIATFEDDAGAYDQADAAGFIKLNALRMRIAANKGRKLF.

Residues 10-18 (AYSGGLDTS) and A37 each bind ATP. Residues Y88 and S93 each contribute to the L-citrulline site. An ATP-binding site is contributed by G118. T120, N124, and D125 together coordinate L-aspartate. Residue N124 participates in L-citrulline binding. L-citrulline contacts are provided by R128, S179, S188, E264, and Y276.

It belongs to the argininosuccinate synthase family. Type 1 subfamily. In terms of assembly, homotetramer.

Its subcellular location is the cytoplasm. The enzyme catalyses L-citrulline + L-aspartate + ATP = 2-(N(omega)-L-arginino)succinate + AMP + diphosphate + H(+). It functions in the pathway amino-acid biosynthesis; L-arginine biosynthesis; L-arginine from L-ornithine and carbamoyl phosphate: step 2/3. The protein is Argininosuccinate synthase of Pseudomonas syringae pv. tomato (strain ATCC BAA-871 / DC3000).